The primary structure comprises 751 residues: Photosystem I P700 chlorophyll a apoprotein A1 (751 aa).

Helical transmembrane passes span 72–95, 158–181, 197–221, 293–311, 348–371, 387–413, 435–457, and 532–550; these read IFSA…FHGA, LYCT…FHYH, MNHH…HVSM, TAHH…GHMY, WHAQ…QHMY, LSLF…IFMV, AIIS…LYIH, and FMVH…LILL. [4Fe-4S] cluster is bound by residues cysteine 574 and cysteine 583. Helical transmembrane passes span 590–611 and 665–687; these read HVFL…HFSW and LSAY…MFLF. Position 676 (histidine 676) interacts with chlorophyll a'. Chlorophyll a-binding residues include methionine 684 and tyrosine 692. Tryptophan 693 lines the phylloquinone pocket. A helical membrane pass occupies residues 725–745; sequence AVGVAHYLLGGIVTTWAFFLA.

It belongs to the PsaA/PsaB family. The PsaA/B heterodimer binds the P700 chlorophyll special pair and subsequent electron acceptors. PSI consists of a core antenna complex that captures photons, and an electron transfer chain that converts photonic excitation into a charge separation. The cyanobacterial PSI reaction center is composed of one copy each of PsaA,B,C,D,E,F,I,J,K,L,M and X, and forms trimeric complexes. PSI electron transfer chain: 5 chlorophyll a, 1 chlorophyll a', 2 phylloquinones and 3 4Fe-4S clusters. PSI core antenna: 90 chlorophyll a, 22 carotenoids, 3 phospholipids and 1 galactolipid. P700 is a chlorophyll a/chlorophyll a' dimer, A0 is one or more chlorophyll a, A1 is one or both phylloquinones and FX is a shared 4Fe-4S iron-sulfur center. is required as a cofactor.

Its subcellular location is the cellular thylakoid membrane. The enzyme catalyses reduced [plastocyanin] + hnu + oxidized [2Fe-2S]-[ferredoxin] = oxidized [plastocyanin] + reduced [2Fe-2S]-[ferredoxin]. Functionally, psaA and PsaB bind P700, the primary electron donor of photosystem I (PSI), as well as the electron acceptors A0, A1 and FX. PSI is a plastocyanin/cytochrome c6-ferredoxin oxidoreductase, converting photonic excitation into a charge separation, which transfers an electron from the donor P700 chlorophyll pair to the spectroscopically characterized acceptors A0, A1, FX, FA and FB in turn. Oxidized P700 is reduced on the lumenal side of the thylakoid membrane by plastocyanin or cytochrome c6. This Synechocystis sp. (strain ATCC 27184 / PCC 6803 / Kazusa) protein is Photosystem I P700 chlorophyll a apoprotein A1.